Consider the following 293-residue polypeptide: Bifunctional protein FolD (293 aa).

NADP(+) contacts are provided by residues 165 to 167, Ser190, and Ile231; that span reads GRS.

The protein belongs to the tetrahydrofolate dehydrogenase/cyclohydrolase family. In terms of assembly, homodimer.

The enzyme catalyses (6R)-5,10-methylene-5,6,7,8-tetrahydrofolate + NADP(+) = (6R)-5,10-methenyltetrahydrofolate + NADPH. It catalyses the reaction (6R)-5,10-methenyltetrahydrofolate + H2O = (6R)-10-formyltetrahydrofolate + H(+). The protein operates within one-carbon metabolism; tetrahydrofolate interconversion. Catalyzes the oxidation of 5,10-methylenetetrahydrofolate to 5,10-methenyltetrahydrofolate and then the hydrolysis of 5,10-methenyltetrahydrofolate to 10-formyltetrahydrofolate. In Synechococcus sp. (strain CC9311), this protein is Bifunctional protein FolD.